We begin with the raw amino-acid sequence, 313 residues long: Proclavaminate amidinohydrolase (313 aa).

The Mn(2+) site is built by His121, Asp144, His146, Asp148, Asp235, and Asp237.

It belongs to the arginase family. In terms of assembly, homohexamer. Mn(2+) is required as a cofactor.

The enzyme catalyses amidinoproclavaminate + H2O = proclavaminate + urea. It functions in the pathway antibiotic biosynthesis; clavulanate biosynthesis; clavulanate from D-glyceraldehyde 3-phosphate and L-arginine: step 4/8. The chain is Proclavaminate amidinohydrolase (pah) from Streptomyces clavuligerus.